Consider the following 548-residue polypeptide: Chaperonin GroEL 2 (548 aa).

ATP-binding positions include 29 to 32 (TLGP), 86 to 90 (DGTTT), G418, 482 to 484 (NAA), and D498.

It belongs to the chaperonin (HSP60) family. Forms a cylinder of 14 subunits composed of two heptameric rings stacked back-to-back. Interacts with the co-chaperonin GroES.

It is found in the cytoplasm. It carries out the reaction ATP + H2O + a folded polypeptide = ADP + phosphate + an unfolded polypeptide.. Together with its co-chaperonin GroES, plays an essential role in assisting protein folding. The GroEL-GroES system forms a nano-cage that allows encapsulation of the non-native substrate proteins and provides a physical environment optimized to promote and accelerate protein folding. The sequence is that of Chaperonin GroEL 2 from Corynebacterium glutamicum (strain ATCC 13032 / DSM 20300 / JCM 1318 / BCRC 11384 / CCUG 27702 / LMG 3730 / NBRC 12168 / NCIMB 10025 / NRRL B-2784 / 534).